The following is a 337-amino-acid chain: 1-aminocyclopropane-1-carboxylate deaminase (337 aa).

Lys-50 carries the post-translational modification N6-(pyridoxal phosphate)lysine. Residue Ser-77 is the Nucleophile of the active site.

The protein belongs to the ACC deaminase/D-cysteine desulfhydrase family. In terms of assembly, homotrimer. Pyridoxal 5'-phosphate is required as a cofactor.

It carries out the reaction 1-aminocyclopropane-1-carboxylate + H2O = 2-oxobutanoate + NH4(+). Catalyzes a cyclopropane ring-opening reaction, the irreversible conversion of 1-aminocyclopropane-1-carboxylate (ACC) to ammonia and alpha-ketobutyrate. Allows growth on ACC as a nitrogen source. In Methylobacterium sp. (strain 4-46), this protein is 1-aminocyclopropane-1-carboxylate deaminase.